We begin with the raw amino-acid sequence, 413 residues long: Arogenate dehydratase/prephenate dehydratase 6, chloroplastic (413 aa).

Residues 1–44 (MKALSSSSPILGASQPATATALIARSGRSEWQSSCAILTSKVIS) constitute a chloroplast transit peptide. In terms of domain architecture, Prephenate dehydratase spans 117–294 (RVAYQGVPGA…NVTRFVMLAR (178 aa)). The ACT domain maps to 308–399 (SIVFAHEKGT…SFLRVLGSYP (92 aa)).

In terms of tissue distribution, expressed in roots, leaves, stems, flowers and siliques.

The protein localises to the plastid. The protein resides in the chloroplast stroma. It catalyses the reaction L-arogenate + H(+) = L-phenylalanine + CO2 + H2O. It carries out the reaction prephenate + H(+) = 3-phenylpyruvate + CO2 + H2O. Its pathway is amino-acid biosynthesis; L-phenylalanine biosynthesis; L-phenylalanine from L-arogenate: step 1/1. The protein operates within amino-acid biosynthesis; L-phenylalanine biosynthesis; phenylpyruvate from prephenate: step 1/1. In terms of biological role, converts the prephenate produced from the shikimate-chorismate pathway into phenylalanine. Dehydratase that uses arogenate and prephenate as substrates. Utilzes more efficiently arogenate than prephenate. The protein is Arogenate dehydratase/prephenate dehydratase 6, chloroplastic of Arabidopsis thaliana (Mouse-ear cress).